The following is a 361-amino-acid chain: MSQNSLRLVEENSVDKTKALDAALSQIERAFGKGSIMRLGKNAPVIEIETVPTGSLSLDIALGVGGLPKGRIVEIYGPESSGKTTLALHTIAEAQKKGGICAFVDAEHALDPVYARKLGVDLENLLISQPDTGEQALEITDTLVRSGAIDVLVVDSVAALTPRAEIEGEMGDSLPGLQARLMSQALRKLTASISRSNCMVIFINQIRMKIGVMFGSPETTTGGNALKFYASVRLDIRRIGSIKERDEVVGNQTRVKVVKNKLAPPFKQVEFDIMYGAGVSKTGELVDLGVKAGVVEKSGAWFSYNSQRLGQGRENAKQYLKDNPEVAREIETTLRQNAGLIAEQFLEDGGPEDDAGDAAEM.

77-84 contacts ATP; the sequence is GPESSGKT.

This sequence belongs to the RecA family.

The protein resides in the cytoplasm. Functionally, can catalyze the hydrolysis of ATP in the presence of single-stranded DNA, the ATP-dependent uptake of single-stranded DNA by duplex DNA, and the ATP-dependent hybridization of homologous single-stranded DNAs. It interacts with LexA causing its activation and leading to its autocatalytic cleavage. This is Protein RecA from Brucella anthropi (strain ATCC 49188 / DSM 6882 / CCUG 24695 / JCM 21032 / LMG 3331 / NBRC 15819 / NCTC 12168 / Alc 37) (Ochrobactrum anthropi).